The chain runs to 151 residues: Regulatory protein RecX (151 aa).

It belongs to the RecX family.

The protein localises to the cytoplasm. Functionally, modulates RecA activity. The polypeptide is Regulatory protein RecX (Chlorobium phaeobacteroides (strain BS1)).